A 557-amino-acid chain; its full sequence is Dihydroxy-acid dehydratase (557 aa).

Mg(2+) is bound at residue aspartate 78. Cysteine 119 contributes to the [2Fe-2S] cluster binding site. Mg(2+) contacts are provided by aspartate 120 and lysine 121. Lysine 121 bears the N6-carboxylysine mark. Position 192 (cysteine 192) interacts with [2Fe-2S] cluster. Glutamate 442 is a Mg(2+) binding site. Serine 468 (proton acceptor) is an active-site residue.

The protein belongs to the IlvD/Edd family. As to quaternary structure, homodimer. The cofactor is [2Fe-2S] cluster. Mg(2+) serves as cofactor.

The catalysed reaction is (2R)-2,3-dihydroxy-3-methylbutanoate = 3-methyl-2-oxobutanoate + H2O. It catalyses the reaction (2R,3R)-2,3-dihydroxy-3-methylpentanoate = (S)-3-methyl-2-oxopentanoate + H2O. It participates in amino-acid biosynthesis; L-isoleucine biosynthesis; L-isoleucine from 2-oxobutanoate: step 3/4. It functions in the pathway amino-acid biosynthesis; L-valine biosynthesis; L-valine from pyruvate: step 3/4. Its function is as follows. Functions in the biosynthesis of branched-chain amino acids. Catalyzes the dehydration of (2R,3R)-2,3-dihydroxy-3-methylpentanoate (2,3-dihydroxy-3-methylvalerate) into 2-oxo-3-methylpentanoate (2-oxo-3-methylvalerate) and of (2R)-2,3-dihydroxy-3-methylbutanoate (2,3-dihydroxyisovalerate) into 2-oxo-3-methylbutanoate (2-oxoisovalerate), the penultimate precursor to L-isoleucine and L-valine, respectively. This chain is Dihydroxy-acid dehydratase, found in Bacillus cereus (strain ATCC 10987 / NRS 248).